Here is a 317-residue protein sequence, read N- to C-terminus: MARGLDLAPLLLLLLAMVAGFCTAQINCTCPTNKMTICNSNGPGGVCQCRAIGSQVLVDCSTLTSKCLLLKARMSARKSSRRLVNPSEHAILDNDGLYDPECDDKGRFKARQCNQTSVCWCVNSVGVRRTDKGDQSLRCDEVVRTHHILIELRHRPTDRAFNHSDLDSELRRLFKERYKLHPSFLAAVHYEEPTIQIELQQNASQKGLRDVDIADAAYYFERDIKGESLFVGRRGLDVQVRGEPLHVERTLIYYLDEKPPQFSMKRLTTGLIAVIAVVAVALVAGVVVLVVTNRRKSGKYKKVELKELGEMRSEPSL.

The first 24 residues, 1–24, serve as a signal peptide directing secretion; sequence MARGLDLAPLLLLLLAMVAGFCTA. Residues 25-270 lie on the Extracellular side of the membrane; it reads QINCTCPTNK…QFSMKRLTTG (246 aa). Asparagine 27 is a glycosylation site (N-linked (GlcNAc...) asparagine). A Thyroglobulin type-1 domain is found at 64–139; sequence TSKCLLLKAR…TDKGDQSLRC (76 aa). 3 disulfide bridges follow: cysteine 67-cysteine 102, cysteine 113-cysteine 119, and cysteine 121-cysteine 139. N-linked (GlcNAc...) asparagine glycosylation occurs at asparagine 114. Residues asparagine 162 and asparagine 202 are each glycosylated (N-linked (GlcNAc...) asparagine). Residues 271 to 291 traverse the membrane as a helical segment; the sequence is LIAVIAVVAVALVAGVVVLVV. The Cytoplasmic segment spans residues 292–317; the sequence is TNRRKSGKYKKVELKELGEMRSEPSL.

This sequence belongs to the EPCAM family.

It localises to the membrane. Functionally, may function as a growth factor receptor. The polypeptide is Tumor-associated calcium signal transducer 2 (Tacstd2) (Rattus norvegicus (Rat)).